A 166-amino-acid chain; its full sequence is MTKTTRLLRATTVAAILLGLTGCAVHLPASAQTPGKQADGVQVSKAWVKAAGSGMTAAFGDVKNTGSGTAIVVGATSSAASSLQLHETVTKNGAETMQEAKSGFRIPAGSTLHLAPGGSHIMLMGLKAPLEAGQKISVTLRFSDGSTSPVAVPVKDFSGANENYKG.

The first 22 residues, 1-22 (MTKTTRLLRATTVAAILLGLTG), serve as a signal peptide directing secretion. The N-palmitoyl cysteine moiety is linked to residue Cys23. Cys23 carries the S-diacylglycerol cysteine lipid modification.

The protein localises to the cell membrane. This is Putative lipoprotein Lxx21020 from Leifsonia xyli subsp. xyli (strain CTCB07).